The following is a 61-amino-acid chain: Metallothionein-2 (61 aa).

At M1 the chain carries N-acetylmethionine. Residues 1-29 (MDPNCSCAAGDSCTCAGSCKCKECKCTSC) are beta. A divalent metal cation is bound by residues C5, C7, C13, C15, C19, C21, C24, C26, C29, C33, C34, C36, C37, C41, C44, C48, C50, and C57. The interval 30–61 (KKSCCSCCPVGCAKCAQGCICKGASDKCSCCA) is alpha. S58 is subject to Phosphoserine. C59 and C60 together coordinate a divalent metal cation.

Belongs to the metallothionein superfamily. Type 1 family. In terms of assembly, interacts with EOLA1.

Metallothioneins have a high content of cysteine residues that bind various heavy metals; these proteins are transcriptionally regulated by both heavy metals and glucocorticoids. This is Metallothionein-2 from Homo sapiens (Human).